We begin with the raw amino-acid sequence, 426 residues long: Torsin-4A (426 aa).

The segment at 41-60 (QPGTEPDSGTGTLGPTGSLG) is disordered. A compositionally biased stretch (low complexity) spans 48 to 60 (SGTGTLGPTGSLG). 2 positions are modified to phosphoserine: S58 and S76. T84 is modified (phosphothreonine). Residue S101 is modified to Phosphoserine. Residues 117–133 (CLLLLVAIVGFQVLNAI) traverse the membrane as a helical segment. 189–196 (GPSGVGKS) contacts ATP.

It belongs to the ClpA/ClpB family. Torsin subfamily.

It is found in the membrane. The chain is Torsin-4A (Tor4a) from Mus musculus (Mouse).